Reading from the N-terminus, the 31-residue chain is QRTNDFIKACGRELVRVWVEICGSVSWGRTA.

A Pyrrolidone carboxylic acid modification is found at Q1.

Belongs to the insulin family. Heterodimer of a B chain and an A chain linked by two disulfide bonds.

It is found in the secreted. Functionally, relaxin is an ovarian hormone that acts with estrogen to produce dilatation of the birth canal in many mammals. This Phocoenoides dalli dalli (Dall's porpoise) protein is Relaxin B chain.